A 535-amino-acid polypeptide reads, in one-letter code: Serine/threonine-protein kinase C (535 aa).

The 266-residue stretch at 12–277 folds into the Protein kinase domain; the sequence is YRIIETLGRG…AMAQTLQGNF (266 aa). ATP contacts are provided by residues 18-26 and K43; that span reads LGRGGFGET. D142 (proton acceptor) is an active-site residue. The tract at residues 371–535 is disordered; it reads NNPPPAVEEP…GEKPIDPEQN (165 aa). A compositionally biased stretch (pro residues) spans 402 to 421; it reads SPIPTPATPSPEPTPSPSPS. The span at 422–435 shows a compositional bias: low complexity; it reads PETTSSPTEDTITP. Composition is skewed to pro residues over residues 446-464 and 472-498; these read APIPEPKPSPSPTISPQPS and TPAPVPKPSPSPTPKPTVPPQISPTPQ.

Belongs to the protein kinase superfamily. Ser/Thr protein kinase family.

The catalysed reaction is L-seryl-[protein] + ATP = O-phospho-L-seryl-[protein] + ADP + H(+). It carries out the reaction L-threonyl-[protein] + ATP = O-phospho-L-threonyl-[protein] + ADP + H(+). In Synechocystis sp. (strain ATCC 27184 / PCC 6803 / Kazusa), this protein is Serine/threonine-protein kinase C (spkC).